Reading from the N-terminus, the 232-residue chain is Enolase-phosphatase E1 (232 aa).

The protein belongs to the HAD-like hydrolase superfamily. MasA/MtnC family. In terms of assembly, monomer. Mg(2+) is required as a cofactor.

It carries out the reaction 5-methylsulfanyl-2,3-dioxopentyl phosphate + H2O = 1,2-dihydroxy-5-(methylsulfanyl)pent-1-en-3-one + phosphate. Its pathway is amino-acid biosynthesis; L-methionine biosynthesis via salvage pathway; L-methionine from S-methyl-5-thio-alpha-D-ribose 1-phosphate: step 3/6. It functions in the pathway amino-acid biosynthesis; L-methionine biosynthesis via salvage pathway; L-methionine from S-methyl-5-thio-alpha-D-ribose 1-phosphate: step 4/6. Its function is as follows. Bifunctional enzyme that catalyzes the enolization of 2,3-diketo-5-methylthiopentyl-1-phosphate (DK-MTP-1-P) into the intermediate 2-hydroxy-3-keto-5-methylthiopentenyl-1-phosphate (HK-MTPenyl-1-P), which is then dephosphorylated to form the acireductone 1,2-dihydroxy-3-keto-5-methylthiopentene (DHK-MTPene). In Xylella fastidiosa (strain Temecula1 / ATCC 700964), this protein is Enolase-phosphatase E1.